The chain runs to 282 residues: Bifunctional protein FolD (282 aa).

NADP(+)-binding positions include 164–166, isoleucine 189, and isoleucine 230; that span reads GAS.

This sequence belongs to the tetrahydrofolate dehydrogenase/cyclohydrolase family. In terms of assembly, homodimer.

The enzyme catalyses (6R)-5,10-methylene-5,6,7,8-tetrahydrofolate + NADP(+) = (6R)-5,10-methenyltetrahydrofolate + NADPH. The catalysed reaction is (6R)-5,10-methenyltetrahydrofolate + H2O = (6R)-10-formyltetrahydrofolate + H(+). It functions in the pathway one-carbon metabolism; tetrahydrofolate interconversion. Its function is as follows. Catalyzes the oxidation of 5,10-methylenetetrahydrofolate to 5,10-methenyltetrahydrofolate and then the hydrolysis of 5,10-methenyltetrahydrofolate to 10-formyltetrahydrofolate. The protein is Bifunctional protein FolD of Campylobacter jejuni subsp. jejuni serotype O:6 (strain 81116 / NCTC 11828).